The primary structure comprises 102 residues: Small ribosomal subunit protein uS14 (102 aa).

Belongs to the universal ribosomal protein uS14 family. Part of the 30S ribosomal subunit. Contacts proteins S3 and S10.

Its function is as follows. Binds 16S rRNA, required for the assembly of 30S particles and may also be responsible for determining the conformation of the 16S rRNA at the A site. The polypeptide is Small ribosomal subunit protein uS14 (Wolbachia pipientis wMel).